Here is a 374-residue protein sequence, read N- to C-terminus: Queuine tRNA-ribosyltransferase (374 aa).

Asp91 acts as the Proton acceptor in catalysis. Substrate-binding positions include 91–95 (DSGGY), Asp145, Gln189, and Gly216. Residues 247-253 (GVGTVPD) are RNA binding. The Nucleophile role is filled by Asp266. Residues 271–275 (TRNAR) form an RNA binding; important for wobble base 34 recognition region. Residues Cys304, Cys306, Cys309, and His335 each coordinate Zn(2+).

This sequence belongs to the queuine tRNA-ribosyltransferase family. Homodimer. Within each dimer, one monomer is responsible for RNA recognition and catalysis, while the other monomer binds to the replacement base PreQ1. Zn(2+) is required as a cofactor.

The catalysed reaction is 7-aminomethyl-7-carbaguanine + guanosine(34) in tRNA = 7-aminomethyl-7-carbaguanosine(34) in tRNA + guanine. The protein operates within tRNA modification; tRNA-queuosine biosynthesis. In terms of biological role, catalyzes the base-exchange of a guanine (G) residue with the queuine precursor 7-aminomethyl-7-deazaguanine (PreQ1) at position 34 (anticodon wobble position) in tRNAs with GU(N) anticodons (tRNA-Asp, -Asn, -His and -Tyr). Catalysis occurs through a double-displacement mechanism. The nucleophile active site attacks the C1' of nucleotide 34 to detach the guanine base from the RNA, forming a covalent enzyme-RNA intermediate. The proton acceptor active site deprotonates the incoming PreQ1, allowing a nucleophilic attack on the C1' of the ribose to form the product. After dissociation, two additional enzymatic reactions on the tRNA convert PreQ1 to queuine (Q), resulting in the hypermodified nucleoside queuosine (7-(((4,5-cis-dihydroxy-2-cyclopenten-1-yl)amino)methyl)-7-deazaguanosine). The chain is Queuine tRNA-ribosyltransferase from Leptospira borgpetersenii serovar Hardjo-bovis (strain JB197).